The primary structure comprises 552 residues: FERRY endosomal RAB5 effector complex subunit 3 (552 aa).

Position 79 is a phosphoserine (serine 79).

As to quaternary structure, component of the FERRY complex composed of five subunits, TBCK, PPP1R21, FERRY3, CRYZL1 and GATD1 with a ratio of 1:2:1:2:4, respectively.

The protein resides in the cytoplasm. Its subcellular location is the early endosome. Component of the FERRY complex (Five-subunit Endosomal Rab5 and RNA/ribosome intermediary). The FERRY complex directly interacts with mRNAs and RAB5A, and functions as a RAB5A effector involved in the localization and the distribution of specific mRNAs most likely by mediating their endosomal transport. The complex recruits mRNAs and ribosomes to early endosomes through direct mRNA-interaction. Plays a role in mast cell degranulation. In Rattus norvegicus (Rat), this protein is FERRY endosomal RAB5 effector complex subunit 3.